The following is a 78-amino-acid chain: Protein SlyX homolog (78 aa).

This sequence belongs to the SlyX family.

The chain is Protein SlyX homolog from Xylella fastidiosa (strain 9a5c).